Reading from the N-terminus, the 158-residue chain is Endoribonuclease YbeY (158 aa).

Zn(2+) contacts are provided by H114, H118, and H124.

This sequence belongs to the endoribonuclease YbeY family. Zn(2+) serves as cofactor.

Its subcellular location is the cytoplasm. Functionally, single strand-specific metallo-endoribonuclease involved in late-stage 70S ribosome quality control and in maturation of the 3' terminus of the 16S rRNA. The sequence is that of Endoribonuclease YbeY from Pasteurella multocida (strain Pm70).